Reading from the N-terminus, the 707-residue chain is Kinesin-like protein KIN-13B (707 aa).

The 326-residue stretch at 152–477 (KIKVVVRKRP…LRYADRVKSL (326 aa)) folds into the Kinesin motor domain. Position 243-250 (243-250 (GQTGSGKT)) interacts with ATP. Residues 619 to 656 (EHLNELLQEEEDLVSAHRKQVEETLDMIKEEMNLLVEA) adopt a coiled-coil conformation.

Belongs to the TRAFAC class myosin-kinesin ATPase superfamily. Kinesin family. KIN-13 subfamily.

This chain is Kinesin-like protein KIN-13B, found in Oryza sativa subsp. japonica (Rice).